Consider the following 227-residue polypeptide: AN1-type zinc finger protein 3 (227 aa).

An A20-type zinc finger spans residues 12 to 44; the sequence is PSLPPRCPCGFWGSSKTMNLCSKCFADFQKKQP. The Zn(2+) site is built by Cys-18, Cys-20, Cys-32, and Cys-35. 2 disordered regions span residues 41–99 and 113–151; these read KKQP…TEEC and PTKRSCGADSQSENEASPVKRPRLVENPERPEESGRSKQ. Low complexity-rich tracts occupy residues 49–59 and 66–77; these read TPSTSNSQSDL and SDNNNTSVTTPT. 2 stretches are compositionally biased toward polar residues: residues 78–96 and 113–127; these read LSPSQQSLPTELNVTSPST and PTKRSCGADSQSENE. The span at 135-148 shows a compositional bias: basic and acidic residues; sequence RLVENPERPEESGR. An AN1-type zinc finger spans residues 151 to 200; it reads QKSRRRCFQCQTKLELVQQELGSCRCGYVFCMLHRLPEQHDCTFDHMGRG. Positions 157, 160, 174, 176, 181, 184, 190, and 192 each coordinate Zn(2+).

In terms of tissue distribution, expressed in testis.

The sequence is that of AN1-type zinc finger protein 3 (Zfand3) from Mus musculus (Mouse).